The chain runs to 579 residues: Probable cytochrome c oxidase subunit 1-alpha (579 aa).

The tract at residues methionine 1–leucine 21 is disordered. A helical transmembrane segment spans residues isoleucine 44–leucine 64. Fe(II)-heme a is bound at residue histidine 90. Helical transmembrane passes span isoleucine 93 to leucine 113, leucine 125 to leucine 145, methionine 174 to isoleucine 194, valine 217 to alanine 237, leucine 262 to isoleucine 282, and phenylalanine 295 to tryptophan 315. Cu cation is bound by residues histidine 268 and tyrosine 272. The 1'-histidyl-3'-tyrosine (His-Tyr) cross-link spans histidine 268 to tyrosine 272. Residues histidine 317 and histidine 318 each coordinate Cu cation. Helical transmembrane passes span methionine 319–valine 339, methionine 363–leucine 383, phenylalanine 397–glycine 417, isoleucine 437–glycine 457, and isoleucine 480–tryptophan 500. Histidine 401 provides a ligand contact to heme a3. Histidine 403 is a Fe(II)-heme a binding site.

The protein belongs to the heme-copper respiratory oxidase family. As to quaternary structure, associates with subunits II, III and IV to form cytochrome c oxidase. Requires Cu(2+) as cofactor. The cofactor is heme.

It localises to the cell membrane. It carries out the reaction 4 Fe(II)-[cytochrome c] + O2 + 8 H(+)(in) = 4 Fe(III)-[cytochrome c] + 2 H2O + 4 H(+)(out). Its pathway is energy metabolism; oxidative phosphorylation. Its function is as follows. Cytochrome c oxidase is the component of the respiratory chain that catalyzes the reduction of oxygen to water. Subunits 1-3 form the functional core of the enzyme complex. CO I is the catalytic subunit of the enzyme. Electrons originating in cytochrome c are transferred via the copper A center of subunit 2 and heme A of subunit 1 to the bimetallic center formed by heme A3 and copper B. The protein is Probable cytochrome c oxidase subunit 1-alpha (ctaD1) of Streptomyces avermitilis (strain ATCC 31267 / DSM 46492 / JCM 5070 / NBRC 14893 / NCIMB 12804 / NRRL 8165 / MA-4680).